The following is a 650-amino-acid chain: Glycoprotein 105 (650 aa).

The chain crosses the membrane as a helical; Signal-anchor for type II membrane protein span at residues Met1–Ala32. Residues Thr33–Tyr650 are Virion surface-facing. Asn52, Asn290, Asn332, Asn338, Asn359, Asn422, Asn516, and Asn552 each carry an N-linked (GlcNAc...) asparagine; by host glycan.

In terms of assembly, associates with the gp82-gp105 complex. N-Glycosylated.

It is found in the virion membrane. The chain is Glycoprotein 105 (U96/U97/U98/U99/U100) from Homo sapiens (Human).